Reading from the N-terminus, the 325-residue chain is MNALTAVQNNAVDSGQDYSGFTLTPSAQSPRLLELTFTEQTTKQFLEQVAEWPVQALEYKSFLRFRVAKILDDLCANQLQPLLLKTLLNRAEGALLINAVGVDDVKQADEMVKLATAVAHLIGRSNFDAMSGQYYARFVVKNVDNSDSYLRQPHRVMELHNDGTYVEEITDYVLMMKIDEQNMQGGNSLLLHLDDWEHLDNYFRHPLARRPMRFAAPPSKNVSKDVFHPVFDVDQQGRPVMRYIDQFVQPKDFEEGVWLSELSDAIETSKGILSVPVPVGKFLLINNLFWLHGRDRFTPHPDLRRELMRQRGYFAYASNHYQTHQ.

Fe cation contacts are provided by H160, D162, and H292.

The protein belongs to the glutarate hydroxylase family. In terms of assembly, homotetramer. The cofactor is Fe(2+).

It carries out the reaction glutarate + 2-oxoglutarate + O2 = (S)-2-hydroxyglutarate + succinate + CO2. It participates in amino-acid degradation. Its function is as follows. Acts as an alpha-ketoglutarate-dependent dioxygenase catalyzing hydroxylation of glutarate (GA) to L-2-hydroxyglutarate (L2HG). Functions in a L-lysine degradation pathway that proceeds via cadaverine, glutarate and L-2-hydroxyglutarate. The sequence is that of Glutarate 2-hydroxylase from Escherichia coli (strain K12 / MC4100 / BW2952).